Consider the following 183-residue polypeptide: Large ribosomal subunit protein uL6 (183 aa).

Belongs to the universal ribosomal protein uL6 family. Part of the 50S ribosomal subunit.

Its function is as follows. This protein binds to the 23S rRNA, and is important in its secondary structure. It is located near the subunit interface in the base of the L7/L12 stalk, and near the tRNA binding site of the peptidyltransferase center. This is Large ribosomal subunit protein uL6 from Ruminiclostridium cellulolyticum (strain ATCC 35319 / DSM 5812 / JCM 6584 / H10) (Clostridium cellulolyticum).